A 238-amino-acid polypeptide reads, in one-letter code: Uridylate kinase (238 aa).

12–15 (KLSG) contacts ATP. Residues 20 to 25 (GDEGFG) are involved in allosteric activation by GTP. Gly-54 serves as a coordination point for UMP. ATP contacts are provided by Gly-55 and Arg-59. Residues Asp-74 and 135-142 (TGSPFFTT) contribute to the UMP site. ATP contacts are provided by Thr-162, Tyr-168, and Asp-171.

This sequence belongs to the UMP kinase family. As to quaternary structure, homohexamer.

Its subcellular location is the cytoplasm. The catalysed reaction is UMP + ATP = UDP + ADP. It participates in pyrimidine metabolism; CTP biosynthesis via de novo pathway; UDP from UMP (UMPK route): step 1/1. With respect to regulation, allosterically activated by GTP. Inhibited by UTP. In terms of biological role, catalyzes the reversible phosphorylation of UMP to UDP. In Histophilus somni (strain 129Pt) (Haemophilus somnus), this protein is Uridylate kinase.